The chain runs to 257 residues: Baramicin A1 (257 aa).

Positions 1-19 (MKSFGLIALAICGVICVAA) are cleaved as a signal peptide. The propeptide occupies 20-21 (EP). Residue glutamine 22 is modified to Pyrrolidone carboxylic acid. Residues 95–122 (GPNFSAKNLGPNGAKSVGIPQRARRSPQ) are disordered. A glycan (N-linked (GlcNAc...) asparagine) is linked at asparagine 97. Positions 118–121 (RRSP) are excised as a propeptide. Residue glutamine 122 is modified to Pyrrolidone carboxylic acid. The propeptide occupies 145 to 148 (RRSP). Position 149 is a pyrrolidone carboxylic acid (glutamine 149). Positions 172–175 (RRSP) are excised as a propeptide. Position 176 is a pyrrolidone carboxylic acid (glutamine 176). Residues 199 to 204 (RRGIND) constitute a propeptide that is removed on maturation. Asparagine 225 is a glycosylation site (N-linked (GlcNAc...) asparagine).

In terms of processing, proteolytically cleaved. Hemolymph (at protein level).

The protein resides in the secreted. Functionally, secreted immune-induced peptides induced by Toll signaling. Has a significant role in resistance to infection by the entomopathogenic fungus B.bassiana R444 and weak antifungal activity against M.rileyi PHP1705. In adult males, activity appears to be important for neuromuscular processes that mediate correct wing posture upon Toll activation. The sequence is that of Baramicin A1 from Drosophila melanogaster (Fruit fly).